The sequence spans 473 residues: Photosystem II CP43 reaction center protein (473 aa).

Positions 1–14 (MKILYSLRRFYHVE) are excised as a propeptide. N-acetylthreonine is present on Thr-15. Phosphothreonine is present on Thr-15. Helical transmembrane passes span 69 to 93 (LFEV…PHLA), 134 to 155 (LLGP…KDRN), 178 to 200 (KALY…RKIT), 255 to 275 (KPFA…LSYS), and 291 to 312 (WFNN…ASQA). Glu-367 is a binding site for [CaMn4O5] cluster. Residues 447–471 (RARAAAAGFEKGIDRDLEPVLFMTP) traverse the membrane as a helical segment.

The protein belongs to the PsbB/PsbC family. PsbC subfamily. PSII is composed of 1 copy each of membrane proteins PsbA, PsbB, PsbC, PsbD, PsbE, PsbF, PsbH, PsbI, PsbJ, PsbK, PsbL, PsbM, PsbT, PsbX, PsbY, PsbZ, Psb30/Ycf12, at least 3 peripheral proteins of the oxygen-evolving complex and a large number of cofactors. It forms dimeric complexes. Binds multiple chlorophylls and provides some of the ligands for the Ca-4Mn-5O cluster of the oxygen-evolving complex. It may also provide a ligand for a Cl- that is required for oxygen evolution. PSII binds additional chlorophylls, carotenoids and specific lipids. is required as a cofactor.

It localises to the plastid. It is found in the chloroplast thylakoid membrane. Functionally, one of the components of the core complex of photosystem II (PSII). It binds chlorophyll and helps catalyze the primary light-induced photochemical processes of PSII. PSII is a light-driven water:plastoquinone oxidoreductase, using light energy to abstract electrons from H(2)O, generating O(2) and a proton gradient subsequently used for ATP formation. The protein is Photosystem II CP43 reaction center protein of Lemna minor (Common duckweed).